Reading from the N-terminus, the 779-residue chain is Endonuclease MutS2 (779 aa).

ATP is bound at residue 328 to 335 (GPNTGGKT). The region spanning 704–779 (LDLRGKRYEE…GSGATIVTLG (76 aa)) is the Smr domain.

Belongs to the DNA mismatch repair MutS family. MutS2 subfamily. As to quaternary structure, homodimer. Binds to stalled ribosomes, contacting rRNA.

Endonuclease that is involved in the suppression of homologous recombination and thus may have a key role in the control of bacterial genetic diversity. In terms of biological role, acts as a ribosome collision sensor, splitting the ribosome into its 2 subunits. Detects stalled/collided 70S ribosomes which it binds and splits by an ATP-hydrolysis driven conformational change. Acts upstream of the ribosome quality control system (RQC), a ribosome-associated complex that mediates the extraction of incompletely synthesized nascent chains from stalled ribosomes and their subsequent degradation. Probably generates substrates for RQC. The protein is Endonuclease MutS2 of Streptococcus agalactiae serotype III (strain NEM316).